The primary structure comprises 430 residues: MALLHSGRVLSGIAAAFHPGLAAAASARASSWWTHVEMGPPDPILGVTEAFKRDTNSKKMNLGVGAYRDDNGKPYVLPSVRKAEAQIAAKNLDKEYLPIGGLAEFCKASAELALGENSEVLKSGRFVTVQTISGTGALRIGASFLQRFFKFSRDVFLPKPSWGNHTPIFRDAGMQLQGYRYYDPKTCGFDFTGAVEDISKIPEQSVLLLHACAHNPTGVDPRPEQWKEIATVVKKRNLFAFFDMAYQGFASGDGDKDAWAVRHFIEQGINVCLCQSYAKNMGLYGERVGAFTMVCKDADEAKRVESQLKILIRPMYSNPPLNGARIAAAILNTPDLRKQWLQEVKGMADRIIGMRTQLVSNLKKEGSTHNWQHITDQIGMFCFTGLKPEQVERLTKEFSIYMTKDGRISVAGVTSGNVGYLAHAIHQVTK.

Residues 1-29 constitute a mitochondrion transit peptide; it reads MALLHSGRVLSGIAAAFHPGLAAAASARA. T48 is modified (phosphothreonine). Residue K59 is modified to N6-acetyllysine. G65 contacts substrate. N6-acetyllysine; alternate is present on K73. K73 is modified (N6-succinyllysine; alternate). K82 carries the post-translational modification N6-acetyllysine. K90 carries the N6-acetyllysine; alternate modification. K90 carries the post-translational modification N6-succinyllysine; alternate. Y96 carries the 3'-nitrotyrosine; alternate modification. Y96 carries the phosphotyrosine; alternate modification. 2 positions are modified to N6-acetyllysine; alternate: K107 and K122. K107 and K122 each carry N6-succinyllysine; alternate. S143 bears the Phosphoserine mark. Position 159 is an N6-acetyllysine; alternate (K159). The residue at position 159 (K159) is an N6-succinyllysine; alternate. A substrate-binding site is contributed by W162. K185 carries the N6-acetyllysine; alternate modification. K185 carries the N6-succinyllysine; alternate modification. N215 contributes to the substrate binding site. An N6-succinyllysine modification is found at K227. An N6-acetyllysine modification is found at K234. 2 positions are modified to N6-acetyllysine; alternate: K279 and K296. K279 is subject to N6-(pyridoxal phosphate)lysine; alternate. At K296 the chain carries N6-succinyllysine; alternate. Residue K302 is modified to N6-acetyllysine. At K309 the chain carries N6-acetyllysine; alternate. Residue K309 is modified to N6-succinyllysine; alternate. An Asymmetric dimethylarginine modification is found at R313. At T333 the chain carries Phosphothreonine. K338 carries the post-translational modification N6-acetyllysine; alternate. Residue K338 is modified to N6-succinyllysine; alternate. K345 carries the N6-acetyllysine modification. K363 bears the N6-acetyllysine; alternate mark. The residue at position 363 (K363) is an N6-succinyllysine; alternate. N6-acetyllysine is present on residues K364 and K387. K396 and K404 each carry N6-acetyllysine; alternate. N6-succinyllysine; alternate occurs at positions 396 and 404. R407 contributes to the substrate binding site.

It belongs to the class-I pyridoxal-phosphate-dependent aminotransferase family. Homodimer. It depends on pyridoxal 5'-phosphate as a cofactor.

The protein resides in the mitochondrion matrix. Its subcellular location is the cell membrane. The catalysed reaction is L-aspartate + 2-oxoglutarate = oxaloacetate + L-glutamate. It catalyses the reaction L-kynurenine + 2-oxoglutarate = kynurenate + L-glutamate + H2O. In terms of biological role, catalyzes the irreversible transamination of the L-tryptophan metabolite L-kynurenine to form kynurenic acid (KA). As a member of the malate-aspartate shuttle, it has a key role in the intracellular NAD(H) redox balance. Is important for metabolite exchange between mitochondria and cytosol, and for amino acid metabolism. Facilitates cellular uptake of long-chain free fatty acids. The polypeptide is Aspartate aminotransferase, mitochondrial (GOT2) (Macaca fascicularis (Crab-eating macaque)).